We begin with the raw amino-acid sequence, 169 residues long: Probable actin-related protein 2/3 complex subunit 4 (169 aa).

The protein belongs to the ARPC4 family. In terms of assembly, component of the Arp2/3 complex, at least composed of arx-1, arx-2, arx-4 and arx-6.

It is found in the cytoplasm. Its subcellular location is the cytoskeleton. Functions as actin-binding component of the Arp2/3 complex which is involved in regulation of actin polymerization and together with an activating nucleation-promoting factor (NPF) mediates the formation of branched actin networks. Seems to contact the mother actin filament. Plays a role in time-dependent memory loss and the retention of conditioned behavior over time. In Caenorhabditis elegans, this protein is Probable actin-related protein 2/3 complex subunit 4.